The following is a 119-amino-acid chain: Ribosome-binding factor A (119 aa).

The protein belongs to the RbfA family. As to quaternary structure, monomer. Binds 30S ribosomal subunits, but not 50S ribosomal subunits or 70S ribosomes.

It localises to the cytoplasm. One of several proteins that assist in the late maturation steps of the functional core of the 30S ribosomal subunit. Associates with free 30S ribosomal subunits (but not with 30S subunits that are part of 70S ribosomes or polysomes). Required for efficient processing of 16S rRNA. May interact with the 5'-terminal helix region of 16S rRNA. The polypeptide is Ribosome-binding factor A (Citrifermentans bemidjiense (strain ATCC BAA-1014 / DSM 16622 / JCM 12645 / Bem) (Geobacter bemidjiensis)).